The primary structure comprises 529 residues: Glucose-6-phosphate isomerase (529 aa).

E323 acts as the Proton donor in catalysis. Residues H352 and K456 contribute to the active site.

The protein belongs to the GPI family.

The protein resides in the cytoplasm. It catalyses the reaction alpha-D-glucose 6-phosphate = beta-D-fructose 6-phosphate. It functions in the pathway carbohydrate biosynthesis; gluconeogenesis. Its pathway is carbohydrate degradation; glycolysis; D-glyceraldehyde 3-phosphate and glycerone phosphate from D-glucose: step 2/4. Catalyzes the reversible isomerization of glucose-6-phosphate to fructose-6-phosphate. In Geobacter sulfurreducens (strain ATCC 51573 / DSM 12127 / PCA), this protein is Glucose-6-phosphate isomerase.